We begin with the raw amino-acid sequence, 462 residues long: Ammonium transporter Rh type B (462 aa).

Residues 1–11 (MTDPSTNMRLK) are Cytoplasmic-facing. A helical membrane pass occupies residues 12–32 (LPITCFILQIILIILFGVLVQ). Residues 33 to 62 (YDEDTDAKKHHHGNHSESKSDIENDFYYRY) are Extracellular-facing. The N-linked (GlcNAc...) asparagine glycan is linked to N46. The chain crosses the membrane as a helical span at residues 63 to 83 (PSFQDVHVMIFVGFGFLMTFL). At 84–94 (QRYGFSSVGFN) the chain is on the cytoplasmic side. The chain crosses the membrane as a helical span at residues 95–115 (FLIAAFSLQWATLMQGFFHGL). At 116–125 (HEGKIHIGVE) the chain is on the extracellular side. A helical membrane pass occupies residues 126 to 146 (SMINADFCTGSVLISFGAVLG). Residues 147–152 (KTSPVQ) are Cytoplasmic-facing. A helical transmembrane segment spans residues 153-173 (LLFMAVFEVTLFAVNEFILLT). The Extracellular portion of the chain corresponds to 174–180 (LLGTKDA). The chain crosses the membrane as a helical span at residues 181-201 (GGSMTIHTFGAYFGLMVTRIL). At 202-220 (YRPNLDKSKHKNCSVYHSD) the chain is on the cytoplasmic side. The chain crosses the membrane as a helical span at residues 221-241 (LFAMIGTLYLWMFWPSFNSAV). At 242-302 (TEHGDPQHRT…VAAGTAGEMM (61 aa)) the chain is on the extracellular side. A helical membrane pass occupies residues 303–323 (LTPFGSMIVGFLAGIISVLGF). The Cytoplasmic segment spans residues 324 to 344 (KYLTPILENKLKIQDTCGIHN). The helical transmembrane segment at 345-365 (LHGMPGVLGAIVGAVTASLAS) threads the bilayer. Over 366–395 (KEVYGEGLEKVFPDVASGKRTASDQGGVQA) the chain is Extracellular. Residues 396 to 416 (ISLAVTLGMALFGGLIVGFIL) form a helical membrane-spanning segment. The Cytoplasmic segment spans residues 417 to 462 (KLPIFGAPRDTTCFEDSLYWEVPGEEESHEDQLTTVKTEESDKLNS). The segment at 441–462 (EEESHEDQLTTVKTEESDKLNS) is disordered. The span at 453–462 (KTEESDKLNS) shows a compositional bias: basic and acidic residues.

The protein belongs to the ammonium transporter (TC 2.A.49) family. Rh subfamily.

It is found in the basolateral cell membrane. It localises to the cytoplasmic vesicle membrane. Its function is as follows. Functions as an ammonia transporter. May play a role in the elimination of ammonia in the gill. The sequence is that of Ammonium transporter Rh type B (rhbg) from Oryzias latipes (Japanese rice fish).